The sequence spans 161 residues: Arachidonate 5-lipoxygenase-activating protein (161 aa).

Over 1-8 (MDQEAVGN) the chain is Lumenal. Residues 9–30 (VVLLAIVTLISVVQNAFFAHKV) form a helical membrane-spanning segment. The Cytoplasmic segment spans residues 31–52 (ELESKAQSGRSFQRTGTLAFER). Residues 53–77 (VYTANQNCVDAYPTFLVVLWTAGLL) traverse the membrane as a helical segment. At 78–80 (CSQ) the chain is on the lumenal side. The helical transmembrane segment at 81–102 (VPAAFAGLMYLFVRQKYFVGYL) threads the bilayer. Over 103–107 (GERTQ) the chain is Cytoplasmic. Residues 108 to 115 (STPGYIFG) lie within the membrane without spanning it. Residues 116–128 (KRIILFLFLMSLA) traverse the membrane as a helical segment. Residues 129–161 (GILNHYLIFFFGSDFENYIRTITTTISPLLLIP) are Lumenal-facing.

The protein belongs to the MAPEG family. In terms of assembly, homotrimer. Interacts with LTC4S and ALOX5.

Its subcellular location is the nucleus membrane. The protein localises to the endoplasmic reticulum membrane. Its function is as follows. Required for leukotriene biosynthesis by ALOX5 (5-lipoxygenase). Anchors ALOX5 to the membrane. Binds arachidonic acid, and could play an essential role in the transfer of arachidonic acid to ALOX5. Binds to MK-886, a compound that blocks the biosynthesis of leukotrienes. In Rattus norvegicus (Rat), this protein is Arachidonate 5-lipoxygenase-activating protein (Alox5ap).